Here is a 76-residue protein sequence, read N- to C-terminus: Beta-defensin 121 (76 aa).

Positions 1 to 15 (MKLLLLLLTVTLLLA) are cleaved as a signal peptide. 3 disulfides stabilise this stretch: Cys-23–Cys-50, Cys-30–Cys-44, and Cys-34–Cys-51.

This sequence belongs to the beta-defensin family.

The protein resides in the secreted. In terms of biological role, has antibacterial activity. In Pan troglodytes (Chimpanzee), this protein is Beta-defensin 121 (DEFB121).